Consider the following 693-residue polypeptide: MDKSIPIKAIPVACVRPDLVDDVTKNTSTIPTMVSPVLTNMPSATSPLLMVPPLRTIWPSNKEWYDGDAGPSSTGPIKREASDNTNDTAHNTFAPPPEMVIPLITIRPSDDSSNYSCDAGAGPSTGPVKRGRGRPKGSKNSTPTEPKKPKVYDPNSLKVTSRGNFDSEITEAETETGNQEIVDSVMMRFDAVRRRLCQINHPEDILTTASGNCTKMGVKTNTRRRIGAVPGIHVGDIFYYWGEMCLVGLHKSNYGGIDFFTAAESAVEGHAAMCVVTAGQYDGETEGLDTLIYSGQGGTDVYGNARDQEMKGGNLALEASVSKGNDVRVVRGVIHPHENNQKIYIYDGMYLVSKFWTVTGKSGFKEFRFKLVRKPNQPPAYAIWKTVENLRNHDLIDSRQGFILEDLSFGAELLRVPLVNEVDEDDKTIPEDFDYIPSQCHSGMMTHEFHFDRQSLGCQNCRHQPCMHQNCTCVQRNGDLLPYHNNILVCRKPLIYECGGSCPCPDHCPTRLVQTGLKLHLEVFKTRNCGWGLRSWDPIRAGTFICEFAGLRKTKEEVEEDDDYLFDTSKIYQRFRWNYEPELLLEDSWEQVSEFINLPTQVLISAKEKGNVGRFMNHSCSPNVFWQPIEYENRGDVYLLIGLFAMKHIPPMTELTYDYGVSCVERSEEDEVLLYKGKKTCLCGSVKCRGSFT.

2 disordered regions span residues 64–99 (WYDG…PPEM) and 111–175 (DSSN…AETE). The segment at residues 129 to 141 (KRGRGRPKGSKNS) is a DNA-binding region (a.T hook). The YDG domain maps to 227-373 (GAVPGIHVGD…FKEFRFKLVR (147 aa)). In terms of domain architecture, Pre-SET spans 454–516 (QSLGCQNCRH…HCPTRLVQTG (63 aa)). 9 residues coordinate Zn(2+): cysteine 458, cysteine 461, cysteine 466, cysteine 471, cysteine 473, cysteine 498, cysteine 502, cysteine 504, and cysteine 508. The 142-residue stretch at 519-660 (LHLEVFKTRN…PMTELTYDYG (142 aa)) folds into the SET domain. Residues 529 to 531 (CGW), aspartate 562, tyrosine 564, arginine 614, and 617 to 618 (NH) each bind S-adenosyl-L-methionine. Residues cysteine 620, cysteine 681, cysteine 683, and cysteine 688 each coordinate Zn(2+). A Post-SET domain is found at 677 to 693 (GKKTCLCGSVKCRGSFT).

Belongs to the class V-like SAM-binding methyltransferase superfamily. Histone-lysine methyltransferase family. Suvar3-9 subfamily.

The protein resides in the nucleus. Its subcellular location is the chromosome. The protein localises to the centromere. It catalyses the reaction N(6)-methyl-L-lysyl(9)-[histone H3] + S-adenosyl-L-methionine = N(6),N(6)-dimethyl-L-lysyl(9)-[histone H3] + S-adenosyl-L-homocysteine + H(+). The catalysed reaction is L-lysyl(9)-[histone H3] + S-adenosyl-L-methionine = N(6)-methyl-L-lysyl(9)-[histone H3] + S-adenosyl-L-homocysteine + H(+). Histone methyltransferase. Methylates 'Lys-9' of histone H3. H3 'Lys-9' methylation represents a specific tag for epigenetic transcriptional repression. The polypeptide is Histone-lysine N-methyltransferase, H3 lysine-9 specific SUVH7 (SUVH7) (Arabidopsis thaliana (Mouse-ear cress)).